A 346-amino-acid polypeptide reads, in one-letter code: N-acetyl-gamma-glutamyl-phosphate reductase (346 aa).

Residue cysteine 150 is part of the active site.

Belongs to the NAGSA dehydrogenase family. Type 1 subfamily.

The protein resides in the cytoplasm. It carries out the reaction N-acetyl-L-glutamate 5-semialdehyde + phosphate + NADP(+) = N-acetyl-L-glutamyl 5-phosphate + NADPH + H(+). Its pathway is amino-acid biosynthesis; L-arginine biosynthesis; N(2)-acetyl-L-ornithine from L-glutamate: step 3/4. Catalyzes the NADPH-dependent reduction of N-acetyl-5-glutamyl phosphate to yield N-acetyl-L-glutamate 5-semialdehyde. The sequence is that of N-acetyl-gamma-glutamyl-phosphate reductase from Brevibacillus brevis (strain 47 / JCM 6285 / NBRC 100599).